A 1612-amino-acid chain; its full sequence is DNA topoisomerase 2-beta (1612 aa).

A2 is subject to N-acetylalanine. K3 is subject to N6-acetyllysine. Glycyl lysine isopeptide (Lys-Gly) (interchain with G-Cter in SUMO2) cross-links involve residues K21 and K22. Residues N100, N129, and 157-159 (SSN) contribute to the ATP site. Residues K165 and K166 each participate in a glycyl lysine isopeptide (Lys-Gly) (interchain with G-Cter in SUMO2) cross-link. Residue 170 to 177 (GRNGYGAK) participates in ATP binding. Residues K216 and K287 each participate in a glycyl lysine isopeptide (Lys-Gly) (interchain with G-Cter in SUMO2) cross-link. Positions 351–353 (KKK) are interaction with DNA. Residues K355 and K361 each participate in a glycyl lysine isopeptide (Lys-Gly) (interchain with G-Cter in SUMO2) cross-link. 385–387 (QTK) is an ATP binding site. Glycyl lysine isopeptide (Lys-Gly) (interchain with G-Cter in SUMO2) cross-links involve residues K425, K427, and K434. A Toprim domain is found at 464-581 (CTLILTEGDS…SLLKHGFLEE (118 aa)). Residues E470, D550, and D552 each coordinate Mg(2+). Glycyl lysine isopeptide (Lys-Gly) (interchain with G-Cter in SUMO2) cross-links involve residues K588, K593, K623, K631, K634, K664, and K700. The region spanning 724–1177 (IPSLVDGFKP…SPSDLWKEDL (454 aa)) is the Topo IIA-type catalytic domain. Y814 acts as the O-(5'-phospho-DNA)-tyrosine intermediate in catalysis. Residues 999–1008 (KLQTTLTCNS) form an interaction with DNA region. A Glycyl lysine isopeptide (Lys-Gly) (interchain with G-Cter in SUMO2) cross-link involves residue K1080. The interval 1098 to 1128 (AWKEAQEKAAEEEDSQNQHDDSSSDSGTPSG) is disordered. Residues K1202, K1205, K1214, and K1215 each participate in a glycyl lysine isopeptide (Lys-Gly) (interchain with G-Cter in SUMO2) cross-link. S1224 bears the Phosphoserine mark. Glycyl lysine isopeptide (Lys-Gly) (interchain with G-Cter in SUMO2) cross-links involve residues K1238, K1250, and K1259. Residues 1245–1586 (LLKKKKGDPD…FTSEPPALPR (342 aa)) form a disordered region. T1280 is subject to Phosphothreonine. Residues K1311 and K1315 each participate in a glycyl lysine isopeptide (Lys-Gly) (interchain with G-Cter in SUMO2) cross-link. 2 stretches are compositionally biased toward basic and acidic residues: residues 1322-1332 (PWSDDESKSES) and 1346-1358 (SLLR…RPKY). Residues S1324, S1328, S1330, S1332, and S1346 each carry the phosphoserine modification. Residue Y1358 is modified to Phosphotyrosine. Over residues 1362–1379 (FSEEEDDDAAAADDSNDL) the composition is skewed to acidic residues. Phosphoserine is present on residues S1363 and S1376. A Glycyl lysine isopeptide (Lys-Gly) (interchain with G-Cter in SUMO2) cross-link involves residue K1385. S1387 is subject to Phosphoserine. Position 1390 is a phosphothreonine (T1390). Position 1400 is a phosphoserine (S1400). The residue at position 1408 (Y1408) is a Phosphotyrosine. Position 1411 is a phosphoserine (S1411). The span at 1417–1429 (ATPEKSSNDKKSQ) shows a compositional bias: basic and acidic residues. K1427 participates in a covalent cross-link: Glycyl lysine isopeptide (Lys-Gly) (interchain with G-Cter in SUMO2). Phosphoserine occurs at positions 1428, 1439, and 1441. A Glycyl lysine isopeptide (Lys-Gly) (interchain with G-Cter in SUMO2) cross-link involves residue K1443. The span at 1443–1453 (KSEDDSAKFDS) shows a compositional bias: basic and acidic residues. A phosphoserine mark is found at S1448, S1453, and S1460. A Glycyl lysine isopeptide (Lys-Gly) (interchain with G-Cter in SUMO2) cross-link involves residue K1477. Residues 1493–1499 (KAKRAPK) form an interaction with PLSCR1 region. 3 positions are modified to phosphoserine: S1509, S1511, and S1513. Positions 1526–1536 (GKGRGAKKRKA) are enriched in basic residues. Residues S1537 and S1539 each carry the phosphoserine modification. Residues 1550–1561 (KPSKTASKKPKK) are compositionally biased toward basic residues. T1562 carries the phosphothreonine modification. A phosphoserine mark is found at S1563 and S1568. A Phosphotyrosine modification is found at Y1596. A Phosphoserine modification is found at S1600.

It belongs to the type II topoisomerase family. In terms of assembly, homodimer. Interacts with KIAA1210. Interacts with PLSCR1. The cofactor is Mg(2+). It depends on Mn(2+) as a cofactor. Ca(2+) is required as a cofactor.

The protein localises to the nucleus. Its subcellular location is the nucleolus. It is found in the nucleoplasm. The enzyme catalyses ATP-dependent breakage, passage and rejoining of double-stranded DNA.. Functionally, key decatenating enzyme that alters DNA topology by binding to two double-stranded DNA molecules, generating a double-stranded break in one of the strands, passing the intact strand through the broken strand, and religating the broken strand. Plays a role in B-cell differentiation. This chain is DNA topoisomerase 2-beta (Top2b), found in Mus musculus (Mouse).